A 339-amino-acid chain; its full sequence is DNA-directed RNA polymerase subunit alpha (339 aa).

The interval 1-233 (MVREEIAVAT…DLFIPFLHAE (233 aa)) is alpha N-terminal domain (alpha-NTD). The alpha C-terminal domain (alpha-CTD) stretch occupies residues 267-339 (KKMALKSIFI…FGFDLPKNGK (73 aa)).

Belongs to the RNA polymerase alpha chain family. As to quaternary structure, in plastids the minimal PEP RNA polymerase catalytic core is composed of four subunits: alpha, beta, beta', and beta''. When a (nuclear-encoded) sigma factor is associated with the core the holoenzyme is formed, which can initiate transcription.

Its subcellular location is the plastid. The protein resides in the chloroplast. It carries out the reaction RNA(n) + a ribonucleoside 5'-triphosphate = RNA(n+1) + diphosphate. Its function is as follows. DNA-dependent RNA polymerase catalyzes the transcription of DNA into RNA using the four ribonucleoside triphosphates as substrates. The sequence is that of DNA-directed RNA polymerase subunit alpha from Piper cenocladum (Ant piper).